The following is a 509-amino-acid chain: Aspartyl/glutamyl-tRNA(Asn/Gln) amidotransferase subunit B (509 aa).

It belongs to the GatB/GatE family. GatB subfamily. Heterotrimer of A, B and C subunits.

It carries out the reaction L-glutamyl-tRNA(Gln) + L-glutamine + ATP + H2O = L-glutaminyl-tRNA(Gln) + L-glutamate + ADP + phosphate + H(+). It catalyses the reaction L-aspartyl-tRNA(Asn) + L-glutamine + ATP + H2O = L-asparaginyl-tRNA(Asn) + L-glutamate + ADP + phosphate + 2 H(+). Allows the formation of correctly charged Asn-tRNA(Asn) or Gln-tRNA(Gln) through the transamidation of misacylated Asp-tRNA(Asn) or Glu-tRNA(Gln) in organisms which lack either or both of asparaginyl-tRNA or glutaminyl-tRNA synthetases. The reaction takes place in the presence of glutamine and ATP through an activated phospho-Asp-tRNA(Asn) or phospho-Glu-tRNA(Gln). This Mycobacterium leprae (strain Br4923) protein is Aspartyl/glutamyl-tRNA(Asn/Gln) amidotransferase subunit B.